A 654-amino-acid polypeptide reads, in one-letter code: Coiled-coil domain-containing protein 81 (654 aa).

A disordered region spans residues S196 to K270. Phosphoserine is present on S206. Basic and acidic residues-rich tracts occupy residues R212 to T222 and G232 to A251. A phosphoserine mark is found at S273, S275, S296, and S419. The segment covering E293–R302 has biased composition (polar residues). The tract at residues E293 to D318 is disordered. Positions S431 to R562 form a coiled coil.

It is found in the cytoplasm. It localises to the cytoskeleton. The protein resides in the microtubule organizing center. The protein localises to the centrosome. This is Coiled-coil domain-containing protein 81 (Ccdc81) from Mus musculus (Mouse).